We begin with the raw amino-acid sequence, 330 residues long: Cobalamin biosynthesis protein CobD (330 aa).

A run of 4 helical transmembrane segments spans residues 60–80 (TLVI…PPIV), 153–173 (GIIA…LLGV), 227–247 (LGIV…WKIF), and 308–328 (IVLF…FVLT).

The protein belongs to the CobD/CbiB family.

It is found in the cell membrane. Its pathway is cofactor biosynthesis; adenosylcobalamin biosynthesis. In terms of biological role, converts cobyric acid to cobinamide by the addition of aminopropanol on the F carboxylic group. This Desulfotalea psychrophila (strain LSv54 / DSM 12343) protein is Cobalamin biosynthesis protein CobD.